The sequence spans 282 residues: Pantothenate synthetase (282 aa).

Position 30–37 (Met-30–His-37) interacts with ATP. His-37 acts as the Proton donor in catalysis. Residue Gln-61 coordinates (R)-pantoate. Gln-61 serves as a coordination point for beta-alanine. Gly-147–Asp-150 lines the ATP pocket. Residue Gln-153 participates in (R)-pantoate binding. ATP contacts are provided by residues Val-176 and Lys-184–Arg-187.

Belongs to the pantothenate synthetase family. As to quaternary structure, homodimer.

Its subcellular location is the cytoplasm. The catalysed reaction is (R)-pantoate + beta-alanine + ATP = (R)-pantothenate + AMP + diphosphate + H(+). Its pathway is cofactor biosynthesis; (R)-pantothenate biosynthesis; (R)-pantothenate from (R)-pantoate and beta-alanine: step 1/1. Its function is as follows. Catalyzes the condensation of pantoate with beta-alanine in an ATP-dependent reaction via a pantoyl-adenylate intermediate. The polypeptide is Pantothenate synthetase (Bacillus mycoides (strain KBAB4) (Bacillus weihenstephanensis)).